The chain runs to 66 residues: Beta-toxin ChFII.7 (66 aa).

Residues 1 to 66 (KEGYLVNHST…VWPLPKKTCN (66 aa)) enclose the LCN-type CS-alpha/beta domain. 4 disulfides stabilise this stretch: Cys12–Cys65, Cys16–Cys41, Cys25–Cys46, and Cys29–Cys48. The residue at position 66 (Asn66) is an Asparagine amide.

As to expression, expressed by the venom gland.

It localises to the secreted. Functionally, beta toxins bind voltage independently at site-4 of sodium channels (Nav) and shift the activation voltage toward more negative potentials, thereby affecting sodium channel activation CC and promoting spontaneous and repetitive firing. The protein is Beta-toxin ChFII.7 of Centruroides hirsutipalpus (Scorpion).